Reading from the N-terminus, the 392-residue chain is MSSKVFLRDKVHVNVGTIGHVDHGKTTLTAAITKILSTKGLAENKSYDQIDKTKEEKERGITINTTHVSYETEKRHYAHVDCPGHADYVKNMITGAAQMDAGILVVSAYHGVMPQTREHVLLAGQVGISKLIVFLNKCDLVKEEEWIHLVEMEVRELLNEYKFDGDKTPFVRGSALKALEGTDVEGINKLLEVLDEYIEDPIRDVEKPFLMPVEGVHTITGRGTVATGRVERGKIKISEEVEIIGLKETKKAIITGLEMFKKELDFAQAGDNVGILLRGITRDQIERGQVLAKPGSLNAYHKFLSQVYILTQQEGGRHTAFFSNYRPQFYFRTTDVTGFIKLKKDVKMVLPGDRTELIVELNHPIAIEAGTKFSIREGGRTIGAGTVTEIIE.

In terms of domain architecture, tr-type G spans 10-202; that stretch reads KVHVNVGTIG…VLDEYIEDPI (193 aa). The segment at 19–26 is G1; it reads GHVDHGKT. 19 to 26 contributes to the GTP binding site; that stretch reads GHVDHGKT. Thr-26 is a Mg(2+) binding site. The G2 stretch occupies residues 60-64; that stretch reads GITIN. Positions 81 to 84 are G3; that stretch reads DCPG. GTP is bound by residues 81–85 and 136–139; these read DCPGH and NKCD. Positions 136-139 are G4; it reads NKCD. The tract at residues 174–176 is G5; that stretch reads SAL.

The protein belongs to the TRAFAC class translation factor GTPase superfamily. Classic translation factor GTPase family. EF-Tu/EF-1A subfamily. In terms of assembly, monomer.

The protein localises to the cytoplasm. The enzyme catalyses GTP + H2O = GDP + phosphate + H(+). In terms of biological role, GTP hydrolase that promotes the GTP-dependent binding of aminoacyl-tRNA to the A-site of ribosomes during protein biosynthesis. The polypeptide is Elongation factor Tu (Phytoplasma mali (strain AT)).